The following is a 168-amino-acid chain: Photosystem I assembly protein Ycf3 (168 aa).

TPR repeat units lie at residues 35–68 (AFTY…EIDP), 72–105 (SYIL…NPFL), and 120–153 (GEQA…TPGN).

The protein belongs to the Ycf3 family.

It localises to the plastid. Its subcellular location is the chloroplast thylakoid membrane. Functionally, essential for the assembly of the photosystem I (PSI) complex. May act as a chaperone-like factor to guide the assembly of the PSI subunits. In Calycanthus floridus var. glaucus (Eastern sweetshrub), this protein is Photosystem I assembly protein Ycf3.